We begin with the raw amino-acid sequence, 67 residues long: Retron Se72 cold shock-like protein (67 aa).

The CSD domain maps to 1-66 (MENGFVNFYD…KGFKAVAIQK (66 aa)).

Functionally, probable cold shock-like component of antiviral defense system retron Se72, composed of a non-coding RNA (ncRNA), a reverse transcriptase (RT) and this protein. Expression of retron Se72 confers protection against bacteriophage lambda. At multiplicity of infection (MOI) of 0.02 cultures slow growth when infected with lambda but do not collapse, at MOI 2 cultures enter growth stasis. This Salmonella heidelberg (strain 579083-10) protein is Retron Se72 cold shock-like protein.